The chain runs to 362 residues: Chorismate synthase (362 aa).

NADP(+) contacts are provided by Arg-48 and Arg-54. FMN contacts are provided by residues 125–127, 241–242, Gly-286, 301–305, and Arg-327; these read RSS, NA, and KPTSS.

The protein belongs to the chorismate synthase family. Homotetramer. The cofactor is FMNH2.

It catalyses the reaction 5-O-(1-carboxyvinyl)-3-phosphoshikimate = chorismate + phosphate. It participates in metabolic intermediate biosynthesis; chorismate biosynthesis; chorismate from D-erythrose 4-phosphate and phosphoenolpyruvate: step 7/7. Its function is as follows. Catalyzes the anti-1,4-elimination of the C-3 phosphate and the C-6 proR hydrogen from 5-enolpyruvylshikimate-3-phosphate (EPSP) to yield chorismate, which is the branch point compound that serves as the starting substrate for the three terminal pathways of aromatic amino acid biosynthesis. This reaction introduces a second double bond into the aromatic ring system. The polypeptide is Chorismate synthase (Paramagnetospirillum magneticum (strain ATCC 700264 / AMB-1) (Magnetospirillum magneticum)).